The following is a 291-amino-acid chain: E3 ubiquitin-protein ligase MARCHF8 (291 aa).

The segment at 22–72 is disordered; it reads YRSKTKEKEREEQNEKTLGHFMSHSSNISKAGSPPSASAPAPVSSFSRTSI. A compositionally biased stretch (basic and acidic residues) spans 25–39; the sequence is KTKEKEREEQNEKTL. A compositionally biased stretch (low complexity) spans 50–72; sequence SKAGSPPSASAPAPVSSFSRTSI. The RING-CH-type zinc-finger motif lies at 72–133; sequence ITPSSQDICR…ELCKYEFIME (62 aa). Zn(2+) is bound by residues Cys-80, Cys-83, Cys-97, Cys-99, His-107, Cys-110, Cys-123, and Cys-126. The next 2 membrane-spanning stretches (helical) occupy residues 157–177 and 197–217; these read CSVTFHVIAITCVVWSLYVLI and FWTKLVVVAIGFTGGLLFMYV. The residue at position 253 (Ser-253) is a Phosphoserine.

As to quaternary structure, interacts with CD86. In terms of tissue distribution, broadly expressed. Present in immature dendritic cells (at protein level).

The protein resides in the golgi apparatus membrane. Its subcellular location is the endoplasmic reticulum membrane. It is found in the cytoplasmic vesicle membrane. It localises to the lysosome membrane. The protein localises to the early endosome membrane. It carries out the reaction S-ubiquitinyl-[E2 ubiquitin-conjugating enzyme]-L-cysteine + [acceptor protein]-L-lysine = [E2 ubiquitin-conjugating enzyme]-L-cysteine + N(6)-ubiquitinyl-[acceptor protein]-L-lysine.. It participates in protein modification; protein ubiquitination. Functionally, E3 ubiquitin-protein ligase that plays several important roles in innate immunity and adaptive immunity. Mediates ubiquitination of CD86 and MHC class II proteins, such as HLA-DR alpha and beta, and promotes their subsequent endocytosis and sorting to lysosomes via multivesicular bodies. Possesses a very broad antiviral activity by specifically inactivating different viral fusion proteins. Targets and ubiquitinates cytoplasmic lysine residues of viral envelope glycoproteins with single transmembrane domains leading to their lysosomal degradation. Therefore, shows broad-spectrum inhibition against many viruses including retroviruses, rhabdoviruses, arenaviruses, sarbecoviruses or influenzaviruses. Strongly blocks human immunodeficiency virus type 1 envelope glycoprotein incorporation into virions by down-regulating its cell surface expression. Also blocks ebola virus glycoprotein/GP incorporation via surface down-regulation. Mediates 'Lys-63'-linked polyubiquitination of influenza M2 to target it to lysosome for degradation. Mediates the regulation of constitutive ubiquitination and trafficking of the viral restriction factor BST2 within the endocytic pathway. Plays a role in maintenance of immune tolerance to self by promoting the turnover and proteasomal degradation of PD-L1/CD274 via ubiquitination. Catalyzes the 'Lys-63'-linked polyubiquitylation of cGAS thereby inhibiting its DNA binding ability and impairing its antiviral innate immunity. Negatively regulates IL7-mediated T-cell homeostasis by mediating 'Lys-27'-linked polyubiquitination of IL7R, leading to its lysosomal degradation. (Microbial infection) Mediates 'Lys-63'-linked polyubiquitination of hepatitis C virus/HCV protein NS2 which allows its binding to HGS, an ESCRT-0 complex component, and this interaction is essential for HCV envelopment. The protein is E3 ubiquitin-protein ligase MARCHF8 of Homo sapiens (Human).